The primary structure comprises 341 residues: Methionine import ATP-binding protein MetN (341 aa).

The ABC transporter domain occupies 9 to 247 (ISVQDVSKKL…SENSITNELF (239 aa)). Position 41–48 (41–48 (GHSGSGKT)) interacts with ATP.

Belongs to the ABC transporter superfamily. Methionine importer (TC 3.A.1.24) family. In terms of assembly, the complex is composed of two ATP-binding proteins (MetN), two transmembrane proteins (MetI) and a solute-binding protein (MetQ).

It localises to the cell inner membrane. It catalyses the reaction L-methionine(out) + ATP + H2O = L-methionine(in) + ADP + phosphate + H(+). The enzyme catalyses D-methionine(out) + ATP + H2O = D-methionine(in) + ADP + phosphate + H(+). Its function is as follows. Part of the ABC transporter complex MetNIQ involved in methionine import. Responsible for energy coupling to the transport system. The protein is Methionine import ATP-binding protein MetN of Chlamydia pneumoniae (Chlamydophila pneumoniae).